Consider the following 248-residue polypeptide: UPF0736 protein BCE33L1074 (248 aa).

It belongs to the UPF0736 family.

The protein is UPF0736 protein BCE33L1074 of Bacillus cereus (strain ZK / E33L).